The sequence spans 124 residues: Heat-labile enterotoxin B chain (124 aa).

The signal sequence occupies residues 1–21 (MNKVKCYVLFTALLSSLYAHG). Cys-30 and Cys-107 are disulfide-bonded.

As to quaternary structure, heterohexamer of one A chain and of five B chains.

Its function is as follows. The biological activity of the toxin is produced by the A chain, which activates intracellular adenyl cyclase. The sequence is that of Heat-labile enterotoxin B chain (eltB) from Escherichia coli.